Consider the following 472-residue polypeptide: Eukaryotic translation initiation factor 2 subunit 3 (472 aa).

Alanine 2 carries the post-translational modification N-acetylalanine; partial. One can recognise a tr-type G domain in the interval 39–247 (QATINIGTIG…YIVKKIPVPL (209 aa)). The segment at 48-55 (GHVAHGKS) is G1. Position 51-56 (51-56 (AHGKST)) interacts with GTP. The segment at 76–80 (NITIK) is G2. Residues 134–137 (DCPG) form a G3 region. Residues 190-193 (NKID) and 225-227 (SAQ) contribute to the GTP site. The G4 stretch occupies residues 190–193 (NKID). The G5 stretch occupies residues 225–227 (SAQ). The interacts with CDC123 stretch occupies residues 457-469 (GQIRRGVTIKPTV).

Belongs to the TRAFAC class translation factor GTPase superfamily. Classic translation factor GTPase family. EIF2G subfamily. As to quaternary structure, eukaryotic translation initiation factor 2 eIF2 is a heterotrimeric complex composed of an alpha (EIF2S1), a beta (EIF2S2) and a gamma (EIF2S3) chain. eIF2 is member of the 43S pre-initiation complex (43S PIC).

It localises to the cytoplasm. Its subcellular location is the cytosol. The catalysed reaction is GTP + H2O = GDP + phosphate + H(+). Functionally, member of the eIF2 complex that functions in the early steps of protein synthesis by forming a ternary complex with GTP and initiator tRNA. This complex binds to a 40S ribosomal subunit, followed by mRNA binding to form the 43S pre-initiation complex (43S PIC). Junction of the 60S ribosomal subunit to form the 80S initiation complex is preceded by hydrolysis of the GTP bound to eIF2 and release of an eIF2-GDP binary complex. In order for eIF2 to recycle and catalyze another round of initiation, the GDP bound to eIF2 must exchange with GTP by way of a reaction catalyzed by eIF-2B. The polypeptide is Eukaryotic translation initiation factor 2 subunit 3 (EIF2S3) (Gallus gallus (Chicken)).